Consider the following 313-residue polypeptide: Ribosomal RNA small subunit methyltransferase H (313 aa).

S-adenosyl-L-methionine contacts are provided by residues Gly35–His37, Asp55, Phe79, Asp100, and Gln107.

The protein belongs to the methyltransferase superfamily. RsmH family.

It is found in the cytoplasm. It catalyses the reaction cytidine(1402) in 16S rRNA + S-adenosyl-L-methionine = N(4)-methylcytidine(1402) in 16S rRNA + S-adenosyl-L-homocysteine + H(+). Its function is as follows. Specifically methylates the N4 position of cytidine in position 1402 (C1402) of 16S rRNA. The chain is Ribosomal RNA small subunit methyltransferase H from Burkholderia orbicola (strain AU 1054).